Consider the following 146-residue polypeptide: MKLHELKAAEGANKASKRVGRGTGSGLGKTSGRGQNGQNSRSGGGVRPGFEGGQMPLYRRLPKRGFKNIFAKEYAAINLDRLNCFEDGTVVTPELLVEKRVVKKVKDGVKILGNGNIEKKLTVKAAKFSKSAIEKIEAAGGKVEVI.

The segment at 1 to 56 is disordered; sequence MKLHELKAAEGANKASKRVGRGTGSGLGKTSGRGQNGQNSRSGGGVRPGFEGGQMP. Composition is skewed to gly residues over residues 21-35 and 42-52; these read RGTG…GRGQ and SGGGVRPGFEG.

It belongs to the universal ribosomal protein uL15 family. In terms of assembly, part of the 50S ribosomal subunit.

Its function is as follows. Binds to the 23S rRNA. This Clostridium botulinum (strain ATCC 19397 / Type A) protein is Large ribosomal subunit protein uL15.